Reading from the N-terminus, the 165-residue chain is uncharacterized protein (165 aa).

A run of 2 helical transmembrane segments spans residues 7 to 27 (LWLALVLLILSIPAVSAQITV) and 141 to 161 (KGTPGFEAFVAVAVIGSIALL).

Its subcellular location is the cell membrane. This is an uncharacterized protein from Archaeoglobus fulgidus (strain ATCC 49558 / DSM 4304 / JCM 9628 / NBRC 100126 / VC-16).